Here is a 708-residue protein sequence, read N- to C-terminus: MEANHQRNDLGLVALTMLAQYHNISLNPEEIKHKFDLDGKGLSLTAWLLAAKSLALKAKHIKKEVSRLHLVNLPALVWQDNGKHFLLVKVDTDNNRYLTYDLEKDAPQILSQDEFEACYQGQLILVTSRASVVGQLAKFDFTWFIPAVIKYRKIFLETLIVSIFLQIFALITPLFFQVVMDKVLVHRGFSTLNIITVALAIVIIFEIVLSGLRTYVFSHSTSRIDVELGAKLFRHLLSLPISYFENRRVGDTVARVRELDQIRNFLTGQALTSVLDLLFSFIFFAVMWYYSPKLTLVILGSLPCYILWSIFISPILRRRLDDKFARSADNQAFLVESVTAINMIKAMAVAPQMTDTWDKQLASYVSSSFRVTVLATIGQQGVQLIQKTVMVINLWLGAHLVISGDLSIGQLIAFNMLSGQVIAPVIRLAQLWQDFQQVGISVTRLGDVLNSPTEQYQGKLSLPEIKGDISFKNIRFRYKPDAPTILNNVNLEIRQGEVIGIVGRSGSGKSTLTKLLQRFYIPENGQVLIDGHDLALADPNWLRRQIGVVLQDNVLLNRSIRENIALSDPGMPMERVIYAAKLAGAHDFISELREGYNTIVGEQGAGLSGGQRQRIAIARALVNNPKILIFDEATSALDYESEHIIMQNMQKICQGRTVILIAHRLSTVKNADRIIVMEKGEIVEQGKHHELLQNSNGLYSYLHQLQLN.

In terms of domain architecture, Peptidase C39 spans 1-126 (MEANHQRNDL…ACYQGQLILV (126 aa)). The ABC transmembrane type-1 domain maps to 155-437 (FLETLIVSIF…LAQLWQDFQQ (283 aa)). Helical transmembrane passes span 159–179 (LIVS…FQVV), 192–212 (LNII…LSGL), 270–290 (ALTS…MWYY), 296–316 (LVIL…SPIL), and 389–409 (VMVI…LSIG). The 236-residue stretch at 469-704 (ISFKNIRFRY…SNGLYSYLHQ (236 aa)) folds into the ABC transporter domain. An ATP-binding site is contributed by 503-510 (GRSGSGKS).

Belongs to the ABC transporter superfamily. Protein-1 exporter (TC 3.A.1.109) family. Homodimer.

It localises to the cell inner membrane. The catalysed reaction is ATP + H2O + proteinSide 1 = ADP + phosphate + proteinSide 2.. Functionally, part of the ABC transporter complex LktBD involved in leukotoxin export. Transmembrane domains (TMD) form a pore in the inner membrane and the ATP-binding domain (NBD) is responsible for energy generation. The chain is Leukotoxin translocation ATP-binding protein LktB (lktB) from Mannheimia haemolytica (Pasteurella haemolytica).